The following is a 407-amino-acid chain: Probable tRNA sulfurtransferase (407 aa).

Residues 61-165 (NEITYRLSKI…LDAIYMYEEV (105 aa)) form the THUMP domain. ATP is bound by residues 183–184 (ML), 208–209 (HF), Arg265, Gly287, and Gln296.

It belongs to the ThiI family.

It localises to the cytoplasm. The catalysed reaction is [ThiI sulfur-carrier protein]-S-sulfanyl-L-cysteine + a uridine in tRNA + 2 reduced [2Fe-2S]-[ferredoxin] + ATP + H(+) = [ThiI sulfur-carrier protein]-L-cysteine + a 4-thiouridine in tRNA + 2 oxidized [2Fe-2S]-[ferredoxin] + AMP + diphosphate. It carries out the reaction [ThiS sulfur-carrier protein]-C-terminal Gly-Gly-AMP + S-sulfanyl-L-cysteinyl-[cysteine desulfurase] + AH2 = [ThiS sulfur-carrier protein]-C-terminal-Gly-aminoethanethioate + L-cysteinyl-[cysteine desulfurase] + A + AMP + 2 H(+). It functions in the pathway cofactor biosynthesis; thiamine diphosphate biosynthesis. Catalyzes the ATP-dependent transfer of a sulfur to tRNA to produce 4-thiouridine in position 8 of tRNAs, which functions as a near-UV photosensor. Also catalyzes the transfer of sulfur to the sulfur carrier protein ThiS, forming ThiS-thiocarboxylate. This is a step in the synthesis of thiazole, in the thiamine biosynthesis pathway. The sulfur is donated as persulfide by IscS. The polypeptide is Probable tRNA sulfurtransferase (Staphylococcus aureus (strain N315)).